Consider the following 277-residue polypeptide: Diaminopimelate epimerase (277 aa).

The substrate site is built by N13, Q46, and N65. C74 (proton donor) is an active-site residue. Residues 75–76, N158, N191, and 209–210 each bind substrate; these read GN and ER. C218 functions as the Proton acceptor in the catalytic mechanism. 219-220 contributes to the substrate binding site; it reads GT.

It belongs to the diaminopimelate epimerase family. As to quaternary structure, homodimer.

The protein resides in the cytoplasm. The catalysed reaction is (2S,6S)-2,6-diaminopimelate = meso-2,6-diaminopimelate. The protein operates within amino-acid biosynthesis; L-lysine biosynthesis via DAP pathway; DL-2,6-diaminopimelate from LL-2,6-diaminopimelate: step 1/1. Catalyzes the stereoinversion of LL-2,6-diaminopimelate (L,L-DAP) to meso-diaminopimelate (meso-DAP), a precursor of L-lysine and an essential component of the bacterial peptidoglycan. This Nitrosospira multiformis (strain ATCC 25196 / NCIMB 11849 / C 71) protein is Diaminopimelate epimerase.